Consider the following 392-residue polypeptide: HORMA domain-containing protein 1 (392 aa).

Residues 25–227 form the HORMA domain; sequence QQSLMFVKRL…TPFHTFRLKV (203 aa). Disordered stretches follow at residues 271 to 292 and 371 to 392; these read IKTK…EPNL and LESS…NEHT. Residue serine 374 is modified to Phosphoserine. A Nuclear localization signal motif is present at residues 381–384; sequence KRRR.

Interacts with HORMAD2. Interacts with IHO1. Phosphorylated at Ser-375 in a SPO11-dependent manner.

The protein resides in the nucleus. It is found in the chromosome. Plays a key role in meiotic progression. Regulates 3 different functions during meiosis: ensures that sufficient numbers of processed DNA double-strand breaks (DSBs) are available for successful homology search by increasing the steady-state numbers of single-stranded DSB ends. Promotes synaptonemal-complex formation independently of its role in homology search. Plays a key role in the male mid-pachytene checkpoint and the female meiotic prophase checkpoint: required for efficient build-up of ATR activity on unsynapsed chromosome regions, a process believed to form the basis of meiotic silencing of unsynapsed chromatin (MSUC) and meiotic prophase quality control in both sexes. In Rattus norvegicus (Rat), this protein is HORMA domain-containing protein 1 (Hormad1).